Here is a 113-residue protein sequence, read N- to C-terminus: Mitochondrial import inner membrane translocase subunit PAM16 like 1 (113 aa).

The transit peptide at 1–48 (MAARVLASVIVMGSGIIARACTQAYRQALANASKTGVAHEATQTIKRG) directs the protein to the mitochondrion. Residues 55–104 (EARQILGVTEKSSWDEILKKYDTLFERNAQNGSFYLQSKVHRAKECLETA) are J-like.

Belongs to the TIM16/PAM16 family. In terms of tissue distribution, expressed at low levels in seedlings, rosettes and inflorescence.

The protein resides in the mitochondrion inner membrane. Regulates ATP-dependent protein translocation into the mitochondrial matrix. The sequence is that of Mitochondrial import inner membrane translocase subunit PAM16 like 1 from Arabidopsis thaliana (Mouse-ear cress).